A 214-amino-acid polypeptide reads, in one-letter code: Chaperone protein TorD (214 aa).

This sequence belongs to the TorD/DmsD family. TorD subfamily.

The protein resides in the cytoplasm. Functionally, involved in the biogenesis of TorA. Acts on TorA before the insertion of the molybdenum cofactor and, as a result, probably favors a conformation of the apoenzyme that is competent for acquiring the cofactor. This chain is Chaperone protein TorD, found in Aeromonas salmonicida (strain A449).